Consider the following 61-residue polypeptide: DNA-directed RNA polymerase subunit Rpo6 (61 aa).

Belongs to the archaeal Rpo6/eukaryotic RPB6 RNA polymerase subunit family. Part of the RNA polymerase complex.

Its subcellular location is the cytoplasm. It carries out the reaction RNA(n) + a ribonucleoside 5'-triphosphate = RNA(n+1) + diphosphate. Its function is as follows. DNA-dependent RNA polymerase (RNAP) catalyzes the transcription of DNA into RNA using the four ribonucleoside triphosphates as substrates. The protein is DNA-directed RNA polymerase subunit Rpo6 of Methanothermobacter thermautotrophicus (strain ATCC 29096 / DSM 1053 / JCM 10044 / NBRC 100330 / Delta H) (Methanobacterium thermoautotrophicum).